We begin with the raw amino-acid sequence, 351 residues long: Putative F-box protein At5g52610 (351 aa).

Positions 1–41 constitute an F-box domain; it reads MISEDLLVEILLRLPVKPLARCLCVCKLWATIIRSRYFINL.

The polypeptide is Putative F-box protein At5g52610 (Arabidopsis thaliana (Mouse-ear cress)).